The primary structure comprises 237 residues: LexA repressor (237 aa).

Positions Phe-26 to Thr-46 form a DNA-binding region, H-T-H motif. Residues Ser-158 and Lys-196 each act as for autocatalytic cleavage activity in the active site.

The protein belongs to the peptidase S24 family. In terms of assembly, homodimer.

The enzyme catalyses Hydrolysis of Ala-|-Gly bond in repressor LexA.. Represses a number of genes involved in the response to DNA damage (SOS response), including recA and lexA. In the presence of single-stranded DNA, RecA interacts with LexA causing an autocatalytic cleavage which disrupts the DNA-binding part of LexA, leading to derepression of the SOS regulon and eventually DNA repair. The protein is LexA repressor of Rhodospirillum centenum (strain ATCC 51521 / SW).